Reading from the N-terminus, the 67-residue chain is WPPVEDRPCCERCTACTLMLPDEANTCVCGDIVPKCHQGCSLCERVDTPSGYQCKSFEYYNCGTKCP.

Intrachain disulfides connect Cys9-Cys66, Cys10-Cys29, Cys13-Cys62, Cys16-Cys27, Cys36-Cys43, and Cys40-Cys54.

Belongs to the Bowman-Birk serine protease inhibitor family. Expressed in bulb (at protein level).

Its function is as follows. Serine protease inhibitor. Strongly inhibits trypsin (Ki = 4 nM) and elastase (Ki = 4.8 nM). Also inhibits chymotrypsin with a Ki of 22 nM. Does not inhibit bacterial subtilisin. In Hyacinthus orientalis (Common hyacinth), this protein is Bowman-Birk type proteinase inhibitor A6.